A 187-amino-acid chain; its full sequence is Preprocaerulein clone PXC202 (187 aa).

Positions 1 to 9 (NDERRFADG) are excised as a propeptide. The disordered stretch occupies residues 1-21 (NDERRFADGQQDYTGWMDFGR). Sulfotyrosine is present on Tyr13. Phe19 carries the post-translational modification Phenylalanine amide. The propeptide occupies 23-73 (DDEDDVNERDVRGFGSFLGKALKAALKIGANALGGSPQQREANDERRFADG). The residue at position 77 (Tyr77) is a Sulfotyrosine. Phe83 is modified (phenylalanine amide). A propeptide spanning residues 87–137 (DDEDDVNERDVRGFGSFLGKALKAALKIGANALGGSLQQREVNDERRFADG) is cleaved from the precursor. Tyr141 is modified (sulfotyrosine). Residue Phe147 is modified to Phenylalanine amide. Residues 151–152 (DG) constitute a propeptide that is removed on maturation. Tyr156 is subject to Sulfotyrosine. A Phenylalanine amide modification is found at Phe162. Residues 166–187 (DDEDDVHERDVRGFGSFLGKAL) constitute a propeptide that is removed on maturation.

This sequence belongs to the gastrin/cholecystokinin family. As to expression, expressed by the skin glands.

It is found in the secreted. Its function is as follows. The pharmacological activities of caerulein are quite similar to the physiological activities of gastrin and related peptides. The protein is Preprocaerulein clone PXC202 of Xenopus laevis (African clawed frog).